The primary structure comprises 875 residues: MAAAPLYCVCRQPYDVNRFMIECDICKDWFHGSCVQVVEHHAADIDVYHCPNCEPIHGPYMMKKHNNWHRHDYTEPNDGTRPVQAGTAVFVKELQARSFASGDILVQMQGNQVTKRFLEKEGFNYPIVVHDLDGLGLKLPPPSFSVSDVEHYVGANKVIDVIDVAKQADSKMKLGEFVKYYYQPERPKVLNVISLEFSDTRMSNLVVVPDIAQKMSWVENYWPDDSFFPKPFVQKYCLMGMKNSYTDFHIDFGGTSVWYHVLWGEKIFYLIKPTKANLALYEAWSSSPNQSEVFFGEKVDKCYKCVVKQGTTILLPTGWIHAVLTSQDSMAFGGNFLHNLNIDMQLRCYEMERRLKTPDLFKFPYFEAICWYVAKNLLETLKELRENKCEAQGFLVNGVKALISSLKMWLRRELTQPNSEVPDNIRPGHLIKALSKEIRHLEDDSNKAVKTQGSAECSLSRSTLEKGDQAQQAARRLQDHHHHRRRHHHHHHHHHHHHHHHHSRKLPSNLDVLELHTLEVLKRLEVGQLKEDSAFSSKVNGKFKKVCPVPAAAVEASHDNALRLVMCNGKIIRERMPITNVAATVNAVEMYHKHRIKLERIPMCPEEKVKKEKCEDEFGVQCTIKKPVSQGESVQTELRTESPHLASSDSDSKAGDSAEKCSLESESSDGEDGGSQRDSGTFVEHLNSHRHSHHKQALKRERPTSPNTDCAIQGMLSMAGLLCPQASGGAADILQQRWWASQGNGSSTSSSSDMWDSSEPCSAPRSPDAEDGSLGEEYSYRESSLSPPLHPSKRHAPNPTPVSNQATKGKRPKKGQATAKQRLGKILKMSRHKGLFLMKPMVFLIPQQGGTPLDPQFLLQSSSICVFPPPLIVSG.

The segment at 5–56 (PLYCVCRQPYDVNRFMIECDICKDWFHGSCVQVVEHHAADIDVYHCPNCEPI) adopts a PHD-type zinc-finger fold. A JmjC domain is found at 197–353 (FSDTRMSNLV…MQLRCYEMER (157 aa)). Residue T246 coordinates substrate. The Fe cation site is built by H249 and D251. K266 is a binding site for substrate. H321 serves as a coordination point for Fe cation. Disordered regions lie at residues 442-506 (EDDS…SRKL), 629-710 (SQGE…NTDC), and 742-820 (QGNG…ATAK). Residues 448 to 462 (AVKTQGSAECSLSRS) show a composition bias toward polar residues. Residues 478–505 (QDHHHHRRRHHHHHHHHHHHHHHHHSRK) show a composition bias toward basic residues. The span at 650–663 (SDSKAGDSAEKCSL) shows a compositional bias: basic and acidic residues. The segment covering 688–697 (SHRHSHHKQA) has biased composition (basic residues). Positions 742–762 (QGNGSSTSSSSDMWDSSEPCS) are enriched in low complexity.

This sequence belongs to the JHDM1 histone demethylase family. JHDM1D subfamily. Requires Fe(2+) as cofactor. As to expression, predominantly expressed in brain.

It localises to the nucleus. Histone demethylase required for brain development. Specifically demethylates dimethylated 'Lys-9' and 'Lys-27' (H3K9me2 and H3K27me2, respectively) of histone H3 and monomethylated histone H4 'Lys-20' residue (H4K20Me1), thereby playing a central role in histone code. The protein is Lysine-specific demethylase 7A (kdm7a) of Danio rerio (Zebrafish).